A 309-amino-acid polypeptide reads, in one-letter code: Pyridoxal kinase (309 aa).

Thr2 carries the N-acetylthreonine; in Pyridoxal kinase, N-terminally processed modification. Ser23 and Thr58 together coordinate pyridoxal. A pyridoxal 5'-phosphate-binding site is contributed by Thr58. Asp124 lines the ATP pocket. Asp124 serves as a coordination point for Na(+). Asp129 contributes to the Mg(2+) binding site. Thr155 contacts Na(+). ATP is bound by residues 157–160, 193–194, 225–227, and Thr232; these read NQFE, TS, and IPA. Na(+) is bound at residue Thr193. Pyridoxal 5'-phosphate is bound at residue 233 to 234; sequence GD. Asp234 serves as the catalytic Proton acceptor.

Belongs to the pyridoxine kinase family. As to quaternary structure, homodimer. Zn(2+) is required as a cofactor. As to expression, expressed ubiquitously in leaves, stems, roots, flowers and siliques. Present in root hairs and other tip-growing cells such as papillar cells on the top of stigma.

The enzyme catalyses pyridoxal + ATP = pyridoxal 5'-phosphate + ADP + H(+). The protein operates within cofactor metabolism; pyridoxal 5'-phosphate salvage; pyridoxal 5'-phosphate from pyridoxal: step 1/1. Its function is as follows. Catalyzes the transfer of a phosphate group from ATP to the 5-hydroxylmethyl group of pyridoxal to form the biologically active pyridoxal phosphate, an active form of vitamin B6. Required for Na(+) and K(+) homeostasis and for salt tolerance. Involved in root hair development, both for initiation and tip growth. This Arabidopsis thaliana (Mouse-ear cress) protein is Pyridoxal kinase.